A 104-amino-acid chain; its full sequence is Large ribosomal subunit protein bL21 (104 aa).

Belongs to the bacterial ribosomal protein bL21 family. In terms of assembly, part of the 50S ribosomal subunit. Contacts protein L20.

This protein binds to 23S rRNA in the presence of protein L20. In Francisella philomiragia subsp. philomiragia (strain ATCC 25017 / CCUG 19701 / FSC 153 / O#319-036), this protein is Large ribosomal subunit protein bL21.